We begin with the raw amino-acid sequence, 870 residues long: Translation initiation factor IF-2 (870 aa).

A disordered region spans residues 49-284 (SFQNSAPAEK…TKRKERPLPE (236 aa)). 2 stretches are compositionally biased toward basic and acidic residues: residues 70 to 81 (RKNEKKQEDNAG) and 94 to 109 (QNND…RDHS). Positions 116-127 (KPKAAALLQQFK) are enriched in low complexity. Composition is skewed to basic and acidic residues over residues 144 to 159 (AKKE…KKEQ) and 168 to 183 (NKES…EKKV). Over residues 254 to 279 (RKRRKNKNKKRKQEQKPKKQITKRKE) the composition is skewed to basic residues. A tr-type G domain is found at 371 to 540 (KRPPVVTIMG…LLQADMMELK (170 aa)). The tract at residues 380 to 387 (GHVDHGKT) is G1. A GTP-binding site is contributed by 380–387 (GHVDHGKT). The interval 405–409 (GITQK) is G2. The segment at 426-429 (DTPG) is G3. GTP-binding positions include 426-430 (DTPGH) and 480-483 (NKMD). Positions 480-483 (NKMD) are G4. The interval 516-518 (SAR) is G5.

The protein belongs to the TRAFAC class translation factor GTPase superfamily. Classic translation factor GTPase family. IF-2 subfamily.

The protein localises to the cytoplasm. In terms of biological role, one of the essential components for the initiation of protein synthesis. Protects formylmethionyl-tRNA from spontaneous hydrolysis and promotes its binding to the 30S ribosomal subunits. Also involved in the hydrolysis of GTP during the formation of the 70S ribosomal complex. In Lactobacillus helveticus (strain DPC 4571), this protein is Translation initiation factor IF-2.